Here is a 197-residue protein sequence, read N- to C-terminus: Recombination protein RecR (197 aa).

Residues 57 to 72 form a C4-type zinc finger; the sequence is CSVCFAITEDDPCWIC. The Toprim domain occupies 79–174; the sequence is GTICVVEEPQ…KVTRLAHGIP (96 aa).

Belongs to the RecR family.

Its function is as follows. May play a role in DNA repair. It seems to be involved in an RecBC-independent recombinational process of DNA repair. It may act with RecF and RecO. The polypeptide is Recombination protein RecR (Geobacter sp. (strain M21)).